The chain runs to 478 residues: 9-divinyl ether synthase (478 aa).

Cys431 is a heme binding site.

This sequence belongs to the cytochrome P450 family. 9-divinyl ether synthase subfamily.

It carries out the reaction (9S)-hydroperoxy-(10E,12Z)-octadecadienoate = colneleate + H2O. In terms of biological role, involved in the biosynthesis of the anti-fungal toxins colneleic acid and colnelenic acid. The chain is 9-divinyl ether synthase (DES) from Capsicum annuum (Capsicum pepper).